Reading from the N-terminus, the 253-residue chain is tRNA (guanine-N(1)-)-methyltransferase (253 aa).

Residues glycine 116 and valine 136–leucine 141 each bind S-adenosyl-L-methionine.

It belongs to the RNA methyltransferase TrmD family. In terms of assembly, homodimer.

Its subcellular location is the cytoplasm. The catalysed reaction is guanosine(37) in tRNA + S-adenosyl-L-methionine = N(1)-methylguanosine(37) in tRNA + S-adenosyl-L-homocysteine + H(+). Specifically methylates guanosine-37 in various tRNAs. The polypeptide is tRNA (guanine-N(1)-)-methyltransferase (Colwellia psychrerythraea (strain 34H / ATCC BAA-681) (Vibrio psychroerythus)).